A 429-amino-acid chain; its full sequence is Gamma-glutamyl phosphate reductase (429 aa).

This sequence belongs to the gamma-glutamyl phosphate reductase family.

The protein resides in the cytoplasm. It carries out the reaction L-glutamate 5-semialdehyde + phosphate + NADP(+) = L-glutamyl 5-phosphate + NADPH + H(+). The protein operates within amino-acid biosynthesis; L-proline biosynthesis; L-glutamate 5-semialdehyde from L-glutamate: step 2/2. Its function is as follows. Catalyzes the NADPH-dependent reduction of L-glutamate 5-phosphate into L-glutamate 5-semialdehyde and phosphate. The product spontaneously undergoes cyclization to form 1-pyrroline-5-carboxylate. This Methylocella silvestris (strain DSM 15510 / CIP 108128 / LMG 27833 / NCIMB 13906 / BL2) protein is Gamma-glutamyl phosphate reductase.